A 41-amino-acid chain; its full sequence is Histone H3.2 (41 aa).

Residues 1 to 41 (MARAKQTARKSTGAEAPRKQLASKAARKSAPATGGIKKPHR) are disordered.

It belongs to the histone H3 family. As to quaternary structure, the nucleosome is a histone octamer containing two molecules each of H2A, H2B, H3 and H4 assembled in one H3-H4 heterotetramer and two H2A-H2B heterodimers. The octamer wraps approximately 147 bp of DNA.

It localises to the nucleus. Its subcellular location is the chromosome. Core component of nucleosome. Nucleosomes wrap and compact DNA into chromatin, limiting DNA accessibility to the cellular machineries which require DNA as a template. Histones thereby play a central role in transcription regulation, DNA repair, DNA replication and chromosomal stability. DNA accessibility is regulated via a complex set of post-translational modifications of histones, also called histone code, and nucleosome remodeling. In Tetrahymena borealis, this protein is Histone H3.2.